The sequence spans 458 residues: 3-isopropylmalate dehydratase large subunit (458 aa).

3 residues coordinate [4Fe-4S] cluster: Cys-339, Cys-399, and Cys-402.

Belongs to the aconitase/IPM isomerase family. LeuC type 1 subfamily. In terms of assembly, heterodimer of LeuC and LeuD. [4Fe-4S] cluster serves as cofactor.

It carries out the reaction (2R,3S)-3-isopropylmalate = (2S)-2-isopropylmalate. Its pathway is amino-acid biosynthesis; L-leucine biosynthesis; L-leucine from 3-methyl-2-oxobutanoate: step 2/4. Catalyzes the isomerization between 2-isopropylmalate and 3-isopropylmalate, via the formation of 2-isopropylmaleate. This is 3-isopropylmalate dehydratase large subunit from Lactococcus lactis subsp. cremoris (strain MG1363).